The chain runs to 217 residues: Pyridoxine/pyridoxamine 5'-phosphate oxidase (217 aa).

Substrate contacts are provided by residues 13–16 (RREY) and Lys-71. FMN is bound by residues 66–71 (RTVLLK), 81–82 (YT), Arg-87, Lys-88, and Gln-110. Tyr-128, Arg-132, and Ser-136 together coordinate substrate. Residues 145-146 (QS) and Trp-190 contribute to the FMN site. 196–198 (RLH) provides a ligand contact to substrate. An FMN-binding site is contributed by Arg-200.

This sequence belongs to the pyridoxamine 5'-phosphate oxidase family. In terms of assembly, homodimer. FMN is required as a cofactor.

It carries out the reaction pyridoxamine 5'-phosphate + O2 + H2O = pyridoxal 5'-phosphate + H2O2 + NH4(+). The enzyme catalyses pyridoxine 5'-phosphate + O2 = pyridoxal 5'-phosphate + H2O2. It participates in cofactor metabolism; pyridoxal 5'-phosphate salvage; pyridoxal 5'-phosphate from pyridoxamine 5'-phosphate: step 1/1. It functions in the pathway cofactor metabolism; pyridoxal 5'-phosphate salvage; pyridoxal 5'-phosphate from pyridoxine 5'-phosphate: step 1/1. Functionally, catalyzes the oxidation of either pyridoxine 5'-phosphate (PNP) or pyridoxamine 5'-phosphate (PMP) into pyridoxal 5'-phosphate (PLP). The chain is Pyridoxine/pyridoxamine 5'-phosphate oxidase from Rubrobacter xylanophilus (strain DSM 9941 / JCM 11954 / NBRC 16129 / PRD-1).